The primary structure comprises 428 residues: Adenosylhomocysteinase (428 aa).

Substrate-binding residues include threonine 62, aspartate 134, and glutamate 159. Threonine 160–threonine 162 contributes to the NAD(+) binding site. Residues lysine 189 and aspartate 193 each contribute to the substrate site. NAD(+) contacts are provided by residues asparagine 194, glycine 223–glycine 228, glutamate 246, asparagine 281, serine 302–histidine 304, and asparagine 349.

The protein belongs to the adenosylhomocysteinase family. NAD(+) serves as cofactor.

Its subcellular location is the cytoplasm. It carries out the reaction S-adenosyl-L-homocysteine + H2O = L-homocysteine + adenosine. The protein operates within amino-acid biosynthesis; L-homocysteine biosynthesis; L-homocysteine from S-adenosyl-L-homocysteine: step 1/1. May play a key role in the regulation of the intracellular concentration of adenosylhomocysteine. The sequence is that of Adenosylhomocysteinase from Gloeobacter violaceus (strain ATCC 29082 / PCC 7421).